The chain runs to 79 residues: Acyl carrier protein (79 aa).

Residues 2-77 (SEIGERVKKI…DATKFLEKNA (76 aa)) form the Carrier domain. Ser-37 carries the O-(pantetheine 4'-phosphoryl)serine modification.

Belongs to the acyl carrier protein (ACP) family. In terms of processing, 4'-phosphopantetheine is transferred from CoA to a specific serine of apo-ACP by AcpS. This modification is essential for activity because fatty acids are bound in thioester linkage to the sulfhydryl of the prosthetic group.

The protein resides in the cytoplasm. The protein operates within lipid metabolism; fatty acid biosynthesis. Functionally, carrier of the growing fatty acid chain in fatty acid biosynthesis. This is Acyl carrier protein from Nitrobacter winogradskyi (strain ATCC 25391 / DSM 10237 / CIP 104748 / NCIMB 11846 / Nb-255).